Here is a 279-residue protein sequence, read N- to C-terminus: Ribonuclease Z (279 aa).

Positions 64, 66, 68, 69, 134, 191, and 245 each coordinate Zn(2+). The Proton acceptor role is filled by Asp-68.

This sequence belongs to the RNase Z family. As to quaternary structure, homodimer. Requires Zn(2+) as cofactor.

The catalysed reaction is Endonucleolytic cleavage of RNA, removing extra 3' nucleotides from tRNA precursor, generating 3' termini of tRNAs. A 3'-hydroxy group is left at the tRNA terminus and a 5'-phosphoryl group is left at the trailer molecule.. Its function is as follows. Zinc phosphodiesterase, which displays some tRNA 3'-processing endonuclease activity. Probably involved in tRNA maturation, by removing a 3'-trailer from precursor tRNA. This chain is Ribonuclease Z, found in Methanopyrus kandleri (strain AV19 / DSM 6324 / JCM 9639 / NBRC 100938).